A 549-amino-acid chain; its full sequence is Cytoplasmic trehalase (549 aa).

Substrate contacts are provided by residues arginine 168, 175-176 (WD), asparagine 212, 221-223 (RSQ), 292-294 (RDE), and glycine 324. Residues aspartate 326 and glutamate 509 each act as proton donor/acceptor in the active site. A substrate-binding site is contributed by glutamate 525.

Belongs to the glycosyl hydrolase 37 family. Monomer.

Its subcellular location is the cytoplasm. The catalysed reaction is alpha,alpha-trehalose + H2O = alpha-D-glucose + beta-D-glucose. Its pathway is glycan degradation; trehalose degradation; D-glucose from alpha,alpha-trehalose: step 1/1. In terms of biological role, hydrolyzes trehalose to glucose. Could be involved, in cells returning to low osmolarity conditions, in the utilization of the accumulated cytoplasmic trehalose, which was synthesized in response to high osmolarity. The chain is Cytoplasmic trehalase from Escherichia fergusonii (strain ATCC 35469 / DSM 13698 / CCUG 18766 / IAM 14443 / JCM 21226 / LMG 7866 / NBRC 102419 / NCTC 12128 / CDC 0568-73).